Here is a 227-residue protein sequence, read N- to C-terminus: ATP-dependent dethiobiotin synthetase BioD (227 aa).

Residue 13 to 18 (DIGKTY) coordinates ATP. A Mg(2+)-binding site is contributed by Thr-17. The active site involves Lys-38. Substrate is bound at residue Ser-42. ATP is bound by residues Asp-55, 116 to 119 (EGSG), and 179 to 180 (NN). Asp-55 and Glu-116 together coordinate Mg(2+).

The protein belongs to the dethiobiotin synthetase family. In terms of assembly, homodimer. The cofactor is Mg(2+).

It is found in the cytoplasm. The enzyme catalyses (7R,8S)-7,8-diammoniononanoate + CO2 + ATP = (4R,5S)-dethiobiotin + ADP + phosphate + 3 H(+). It functions in the pathway cofactor biosynthesis; biotin biosynthesis; biotin from 7,8-diaminononanoate: step 1/2. Its function is as follows. Catalyzes a mechanistically unusual reaction, the ATP-dependent insertion of CO2 between the N7 and N8 nitrogen atoms of 7,8-diaminopelargonic acid (DAPA, also called 7,8-diammoniononanoate) to form a ureido ring. This is ATP-dependent dethiobiotin synthetase BioD from Clostridium botulinum (strain Okra / Type B1).